The sequence spans 474 residues: Membrane-bound acylglycerophosphatidylinositol O-acyltransferase mboat7 (474 aa).

Residues 1–5 lie on the Cytoplasmic side of the membrane; sequence MSPNE. A helical transmembrane segment spans residues 6–22; it reads LTYLAILLGSAPLGFLF. The Lumenal segment spans residues 23-33; the sequence is KNGSPQVKQRG. Residues 34 to 57 form a helical membrane-spanning segment; sequence SAAVGVALTLITCHIHSLHSAITI. The Cytoplasmic segment spans residues 58–73; the sequence is LGTWLIIKILPRSCHF. A helical transmembrane segment spans residues 74 to 93; that stretch reads PTLGWTFTYLLFFRTITYFD. The Lumenal portion of the chain corresponds to 94–193; that stretch reads IPAPTPFTNA…IPSWKPLVSR (100 aa). A helical transmembrane segment spans residues 194–211; that stretch reads LKPAPVFGVLFLIASQYF. Residues 212–230 are Cytoplasmic-facing; that stretch reads PLDYVKTDEFYEQAFLYRL. A helical membrane pass occupies residues 231–260; it reads FYMVPTFFIFRMRFYVAWIFAECGCISAAF. Residues 261-427 lie on the Lumenal side of the membrane; sequence GAYPVSAKSR…LTFTDTYRYW (167 aa). An N-linked (GlcNAc...) asparagine glycan is attached at asparagine 322. Residues 428-448 traverse the membrane as a helical segment; that stretch reads QSIYFSVHVLAISLFLLGRVL. Over 449 to 473 the chain is Cytoplasmic; sequence ALKSPRRPRNTKEEKAEAKQENRLQ.

It belongs to the membrane-bound acyltransferase family.

It localises to the endoplasmic reticulum membrane. The enzyme catalyses a 1-acyl-sn-glycero-3-phospho-(1D-myo-inositol) + (5Z,8Z,11Z,14Z)-eicosatetraenoyl-CoA = a 1-acyl-2-(5Z,8Z,11Z,14Z-eicosatetraenoyl)-sn-glycero-3-phospho-(1D-myo-inositol) + CoA. It carries out the reaction (5Z,8Z,11Z,14Z)-eicosatetraenoyl-CoA + 1-hexadecanoyl-sn-glycero-3-phosphocholine = 1-hexadecanoyl-2-(5Z,8Z,11Z,14Z-eicosatetraenoyl)-sn-glycero-3-phosphocholine + CoA. It catalyses the reaction a 1-acyl-sn-glycero-3-phospho-(1D-myo-inositol) + an acyl-CoA = a 1,2-diacyl-sn-glycero-3-phospho-(1D-myo-inositol) + CoA. The catalysed reaction is 1-octadecanoyl-sn-glycero-3-phospho-(1D-myo-inositol) + (5Z,8Z,11Z,14Z)-eicosatetraenoyl-CoA = 1-octadecanoyl-2-(5Z,8Z,11Z,14Z-eicosatetraenoyl)-sn-glycero-3-phospho-(1D-myo-inositol) + CoA. It functions in the pathway lipid metabolism; phospholipid metabolism. Functionally, acyltransferase which catalyzes the transfer of an acyl group from an acyl-CoA to a lysophosphatidylinositol (1-acylglycerophosphatidylinositol or LPI) leading to the production of a phosphatidylinositol (1,2-diacyl-sn-glycero-3-phosphoinositol or PI) and participates in the reacylation step of the phospholipid remodeling pathway also known as the Lands cycle. Prefers arachidonoyl-CoA as the acyl donor, thus contributing to the regulation of free levels arachidonic acid in cell. The protein is Membrane-bound acylglycerophosphatidylinositol O-acyltransferase mboat7 (mboat7) of Xenopus laevis (African clawed frog).